The chain runs to 475 residues: Ribulose bisphosphate carboxylase large chain (475 aa).

Positions 1–2 are excised as a propeptide; sequence MS. At Pro3 the chain carries N-acetylproline. Lys14 carries the post-translational modification N6,N6,N6-trimethyllysine. Asn123 and Thr173 together coordinate substrate. Lys175 functions as the Proton acceptor in the catalytic mechanism. Lys177 lines the substrate pocket. 3 residues coordinate Mg(2+): Lys201, Asp203, and Glu204. Lys201 carries the N6-carboxylysine modification. His294 acts as the Proton acceptor in catalysis. Residues Arg295, His327, and Ser379 each contribute to the substrate site.

This sequence belongs to the RuBisCO large chain family. Type I subfamily. In terms of assembly, heterohexadecamer of 8 large chains and 8 small chains; disulfide-linked. The disulfide link is formed within the large subunit homodimers. Mg(2+) serves as cofactor. Post-translationally, the disulfide bond which can form in the large chain dimeric partners within the hexadecamer appears to be associated with oxidative stress and protein turnover.

The protein resides in the plastid. It is found in the chloroplast. The catalysed reaction is 2 (2R)-3-phosphoglycerate + 2 H(+) = D-ribulose 1,5-bisphosphate + CO2 + H2O. It catalyses the reaction D-ribulose 1,5-bisphosphate + O2 = 2-phosphoglycolate + (2R)-3-phosphoglycerate + 2 H(+). RuBisCO catalyzes two reactions: the carboxylation of D-ribulose 1,5-bisphosphate, the primary event in carbon dioxide fixation, as well as the oxidative fragmentation of the pentose substrate in the photorespiration process. Both reactions occur simultaneously and in competition at the same active site. The chain is Ribulose bisphosphate carboxylase large chain from Betula papyrifera (Paper birch).